The primary structure comprises 190 residues: MKTGKELKPGTVIRIDNDPWLVQKAEFTKSGRNSAIMKTKLKNLLTGYKTETVYGADDKLDDVILDRKEATLSFISGDTYTFMDTTDYTMYELNAEDIEAVLPFIEEGMTDVCEAVFFEDRLVSVDLPTTIVRQVDYTEGSARGDTSGKVMKPAKLKNGTELSVADFIEIGDMIEIDTREGGSYKGRAKV.

Belongs to the elongation factor P family.

It is found in the cytoplasm. Its pathway is protein biosynthesis; polypeptide chain elongation. Its function is as follows. Involved in peptide bond synthesis. Stimulates efficient translation and peptide-bond synthesis on native or reconstituted 70S ribosomes in vitro. Probably functions indirectly by altering the affinity of the ribosome for aminoacyl-tRNA, thus increasing their reactivity as acceptors for peptidyl transferase. This chain is Elongation factor P, found in Pseudomonas fluorescens (strain ATCC BAA-477 / NRRL B-23932 / Pf-5).